The chain runs to 148 residues: Probable transcriptional regulator SyrB (148 aa).

A disordered region spans residues 1-58 (MADESNTGPVAAAEAVAETQAPAGKRKSSSRRQRTAAGQVAESKTTAKPKRYSETERA). The span at 7 to 23 (TGPVAAAEAVAETQAPA) shows a compositional bias: low complexity. Residues 24-34 (GKRKSSSRRQR) show a composition bias toward basic residues.

Belongs to the SyrB family.

Functionally, responsible for the repression of SyrM activity. This chain is Probable transcriptional regulator SyrB (syrB), found in Sinorhizobium fredii (strain NBRC 101917 / NGR234).